Reading from the N-terminus, the 382-residue chain is Dual-specificity RNA methyltransferase RlmN (382 aa).

Glu-96 serves as the catalytic Proton acceptor. A Radical SAM core domain is found at 102-342 (QGKRGTLCVS…VRTTRGEDID (241 aa)). Residues Cys-109 and Cys-345 are joined by a disulfide bond. Cys-116, Cys-120, and Cys-123 together coordinate [4Fe-4S] cluster. S-adenosyl-L-methionine-binding positions include 170–171 (GE), Ser-202, 224–226 (SLH), and Asn-302. Catalysis depends on Cys-345, which acts as the S-methylcysteine intermediate.

This sequence belongs to the radical SAM superfamily. RlmN family. [4Fe-4S] cluster is required as a cofactor.

Its subcellular location is the cytoplasm. It carries out the reaction adenosine(2503) in 23S rRNA + 2 reduced [2Fe-2S]-[ferredoxin] + 2 S-adenosyl-L-methionine = 2-methyladenosine(2503) in 23S rRNA + 5'-deoxyadenosine + L-methionine + 2 oxidized [2Fe-2S]-[ferredoxin] + S-adenosyl-L-homocysteine. The enzyme catalyses adenosine(37) in tRNA + 2 reduced [2Fe-2S]-[ferredoxin] + 2 S-adenosyl-L-methionine = 2-methyladenosine(37) in tRNA + 5'-deoxyadenosine + L-methionine + 2 oxidized [2Fe-2S]-[ferredoxin] + S-adenosyl-L-homocysteine. In terms of biological role, specifically methylates position 2 of adenine 2503 in 23S rRNA and position 2 of adenine 37 in tRNAs. m2A2503 modification seems to play a crucial role in the proofreading step occurring at the peptidyl transferase center and thus would serve to optimize ribosomal fidelity. The polypeptide is Dual-specificity RNA methyltransferase RlmN (Pseudomonas fluorescens (strain SBW25)).